Reading from the N-terminus, the 119-residue chain is Ethylene-responsive proteinase inhibitor 1 (119 aa).

An N-terminal signal peptide occupies residues 1–27; the sequence is MEANKSMVKLVAFLIILVSSCFQSLTA. Positions 28–48 are excised as a propeptide; it reads QDLEIEVSDGLNVLQVHDVSQ.

Belongs to the protease inhibitor I13 (potato type I serine protease inhibitor) family.

It is found in the secreted. The protein is Ethylene-responsive proteinase inhibitor 1 of Solanum lycopersicum (Tomato).